The sequence spans 431 residues: Beta-lactamase hydrolase-like protein (431 aa).

Residues His-212, His-214, and His-286 each coordinate Zn(2+). Residue Asp-309 participates in substrate binding.

It belongs to the metallo-beta-lactamase superfamily. Requires Zn(2+) as cofactor.

Its function is as follows. Could play a role in cell adherence or biofilm development. This is Beta-lactamase hydrolase-like protein from Xylella fastidiosa (strain Temecula1 / ATCC 700964).